The following is a 486-amino-acid chain: CUGBP Elav-like family member 5 (486 aa).

The segment covering 1–11 (MARLTEREARR) has biased composition (basic and acidic residues). The disordered stretch occupies residues 1–39 (MARLTEREARRQQQQHPPQQQQPRACPMSGPEPPAQQSD). Over residues 12-24 (QQQQHPPQQQQPR) the composition is skewed to low complexity. 3 RRM domains span residues 47 to 128 (IKLF…PADS), 135 to 215 (RKLF…FADT), and 401 to 479 (CNLF…LKRP).

This sequence belongs to the CELF/BRUNOL family.

The protein localises to the nucleus. It is found in the cytoplasm. In terms of biological role, RNA-binding protein that may be implicated in the regulation of pre-mRNA alternative splicing. This chain is CUGBP Elav-like family member 5 (celf5), found in Xenopus tropicalis (Western clawed frog).